A 471-amino-acid chain; its full sequence is Glutamate--tRNA ligase 1 (471 aa).

A 'HIGH' region motif is present at residues 10–20 (PSPTGFLHIGG). Residues 113 to 140 (ARKEGRPPRYDGRWRDRDPSEAPKDRDP) form a disordered region. Positions 239 to 243 (KLSKR) match the 'KMSKS' region motif. K242 serves as a coordination point for ATP.

This sequence belongs to the class-I aminoacyl-tRNA synthetase family. Glutamate--tRNA ligase type 1 subfamily. Monomer.

It is found in the cytoplasm. The catalysed reaction is tRNA(Glu) + L-glutamate + ATP = L-glutamyl-tRNA(Glu) + AMP + diphosphate. In terms of biological role, catalyzes the attachment of glutamate to tRNA(Glu) in a two-step reaction: glutamate is first activated by ATP to form Glu-AMP and then transferred to the acceptor end of tRNA(Glu). The protein is Glutamate--tRNA ligase 1 of Xanthobacter autotrophicus (strain ATCC BAA-1158 / Py2).